Here is a 238-residue protein sequence, read N- to C-terminus: 2-C-methyl-D-erythritol 4-phosphate cytidylyltransferase (238 aa).

This sequence belongs to the IspD/TarI cytidylyltransferase family. IspD subfamily.

The enzyme catalyses 2-C-methyl-D-erythritol 4-phosphate + CTP + H(+) = 4-CDP-2-C-methyl-D-erythritol + diphosphate. It functions in the pathway isoprenoid biosynthesis; isopentenyl diphosphate biosynthesis via DXP pathway; isopentenyl diphosphate from 1-deoxy-D-xylulose 5-phosphate: step 2/6. In terms of biological role, catalyzes the formation of 4-diphosphocytidyl-2-C-methyl-D-erythritol from CTP and 2-C-methyl-D-erythritol 4-phosphate (MEP). The polypeptide is 2-C-methyl-D-erythritol 4-phosphate cytidylyltransferase (Acinetobacter baumannii (strain ATCC 17978 / DSM 105126 / CIP 53.77 / LMG 1025 / NCDC KC755 / 5377)).